The primary structure comprises 1461 residues: DNA topoisomerase 2 (1461 aa).

A compositionally biased stretch (acidic residues) spans 1-17 (MSESESDYFTDGSEDDF). Positions 1–61 (MSESESDYFT…TPKPTNASET (61 aa)) are disordered. A compositionally biased stretch (low complexity) spans 41-52 (TNSTVSSSRSST). ATP is bound by residues Asn-120, Asn-149, 177–179 (SSN), and 190–197 (GRNGFGAK). Residues 382–389 (SKKEKGKK) are interaction with DNA. Residue 418–420 (QTK) coordinates ATP. A Toprim domain is found at 498–614 (CTLILTEGLS…GLLDIPGFLL (117 aa)). Mg(2+) contacts are provided by Glu-504, Asp-583, and Asp-585. Residues 752-1226 (IPSVLDGFKP…SAKDLWNQDL (475 aa)) enclose the Topo IIA-type catalytic domain. Tyr-842 (O-(5'-phospho-DNA)-tyrosine intermediate) is an active-site residue. The interaction with DNA stretch occupies residues 1024 to 1033 (KLVSSLSLAN). 2 disordered regions span residues 1122–1155 (DGKP…DVGN) and 1244–1461 (RESL…IVDE). Positions 1133-1153 (LTGDDADEEEETQEQEGDEDV) are enriched in acidic residues. Positions 1251-1261 (GKKKSTKRRAK) are enriched in basic residues. Basic and acidic residues-rich tracts occupy residues 1274–1283 (VKVEPKEKKS) and 1406–1417 (DKPEPKERRTRE). The span at 1434 to 1461 (DSDDEDEDEEDDIVMSDGDDDDDFIVDE) shows a compositional bias: acidic residues.

It belongs to the type II topoisomerase family. In terms of assembly, homodimer. Mg(2+) serves as cofactor. Mn(2+) is required as a cofactor. It depends on Ca(2+) as a cofactor.

The protein localises to the nucleus. The enzyme catalyses ATP-dependent breakage, passage and rejoining of double-stranded DNA.. In terms of biological role, control of topological states of DNA by transient breakage and subsequent rejoining of DNA strands. Topoisomerase II makes double-strand breaks. The chain is DNA topoisomerase 2 (TOP2) from Candida albicans (Yeast).